Here is a 303-residue protein sequence, read N- to C-terminus: Cathepsin B-like CP1 (303 aa).

A signal peptide spans 1–19 (MALSLLLAVVCAKPLVSRA). An N-linked (GlcNAc...) asparagine glycan is attached at N41. 3 disulfide bridges follow: C92-C119, C102-C145, and C138-C181. C105 is a catalytic residue. Catalysis depends on residues H249 and N270.

Belongs to the peptidase C1 family.

The protein localises to the vacuole. Its function is as follows. Thiol protease which is required for parasite excystation and invasion of the proximal small intestine of the human host. This is Cathepsin B-like CP1 (CP1) from Giardia intestinalis (Giardia lamblia).